Here is a 355-residue protein sequence, read N- to C-terminus: Type II restriction enzyme CfrBI (355 aa).

The catalysed reaction is Endonucleolytic cleavage of DNA to give specific double-stranded fragments with terminal 5'-phosphates.. Functionally, a P subtype restriction enzyme that recognizes the double-stranded sequence 5'-CCWWGG-3' and cleaves after C-1. This is Type II restriction enzyme CfrBI from Citrobacter freundii.